A 207-amino-acid chain; its full sequence is Thymidylate kinase (207 aa).

9–16 (GGEGCGKS) lines the ATP pocket.

Belongs to the thymidylate kinase family.

It catalyses the reaction dTMP + ATP = dTDP + ADP. Functionally, phosphorylation of dTMP to form dTDP in both de novo and salvage pathways of dTTP synthesis. This Dehalococcoides mccartyi (strain ATCC BAA-2266 / KCTC 15142 / 195) (Dehalococcoides ethenogenes (strain 195)) protein is Thymidylate kinase.